Here is a 72-residue protein sequence, read N- to C-terminus: Alpha-elapitoxin-Ast2b (72 aa).

5 cysteine pairs are disulfide-bonded: cysteine 3-cysteine 20, cysteine 13-cysteine 41, cysteine 26-cysteine 30, cysteine 45-cysteine 56, and cysteine 57-cysteine 62. Arginine 72 is subject to Arginine amide.

It belongs to the three-finger toxin family. Long-chain subfamily. Type II alpha-neurotoxin sub-subfamily. Expressed by the venom gland.

It is found in the secreted. Binds with high affinity to muscular (alpha-1/CHRNA1) and neuronal (alpha-7/CHRNA7) nicotinic acetylcholine receptor (nAChR) and inhibits acetylcholine from binding to the receptor, thereby impairing neuromuscular and neuronal transmission. The polypeptide is Alpha-elapitoxin-Ast2b (Hydrophis stokesii (Stokes's sea snake)).